The following is a 346-amino-acid chain: MPMSAETTSLPAALPIALDAAGGDHGVTPNVEGAVQAARAGVPVLLVGPRVALHAELGKHAGSASLPLTVVDAPDVIGMDEHASDVRSRSGASINVCTQLVKEGKAAAAVSMGHSGATMASALLTLGRLKGVDRPAILTHLPSKKGFVTLLDVGANADVKPVYLAQWARLATVYLQVVEGVQDPTVGLLSIGEEDHKGSQLVLAAHALLRELDGHSIHFYGNVEGRDILQGTTDIVVTDGFTGNVVLKLAEGEAKVLFGWVREALGSRLQTKIGALLVRGALRGLAERMDPSTYGASILLGVRGLTLIGHGSADARAVKNALLRASRAYEAKLIERLEAALTPQDG.

It belongs to the PlsX family. Homodimer. Probably interacts with PlsY.

The protein localises to the cytoplasm. The enzyme catalyses a fatty acyl-[ACP] + phosphate = an acyl phosphate + holo-[ACP]. The protein operates within lipid metabolism; phospholipid metabolism. In terms of biological role, catalyzes the reversible formation of acyl-phosphate (acyl-PO(4)) from acyl-[acyl-carrier-protein] (acyl-ACP). This enzyme utilizes acyl-ACP as fatty acyl donor, but not acyl-CoA. The protein is Phosphate acyltransferase of Deinococcus geothermalis (strain DSM 11300 / CIP 105573 / AG-3a).